A 602-amino-acid chain; its full sequence is Elongation factor 4 (602 aa).

Residues 6 to 188 (KYIRNFCIIA…AIIRRVPPPR (183 aa)) form the tr-type G domain. GTP contacts are provided by residues 18–23 (DHGKST) and 135–138 (NKID).

This sequence belongs to the TRAFAC class translation factor GTPase superfamily. Classic translation factor GTPase family. LepA subfamily.

Its subcellular location is the cell membrane. It carries out the reaction GTP + H2O = GDP + phosphate + H(+). Required for accurate and efficient protein synthesis under certain stress conditions. May act as a fidelity factor of the translation reaction, by catalyzing a one-codon backward translocation of tRNAs on improperly translocated ribosomes. Back-translocation proceeds from a post-translocation (POST) complex to a pre-translocation (PRE) complex, thus giving elongation factor G a second chance to translocate the tRNAs correctly. Binds to ribosomes in a GTP-dependent manner. The chain is Elongation factor 4 from Moorella thermoacetica (strain ATCC 39073 / JCM 9320).